A 640-amino-acid chain; its full sequence is Calpain-5 (640 aa).

The region spanning 26-343 (LFEDPLFPAT…FTDIIKCRLI (318 aa)) is the Calpain catalytic domain. Catalysis depends on residues Cys81, His252, and Asn284. A domain III region spans residues 344–496 (NTSYLSIHKT…VFTDVPSNCR (153 aa)). In terms of domain architecture, C2 spans 499–617 (RLDEPPRTCW…HTLHLQDRSS (119 aa)).

It belongs to the peptidase C2 family.

Calcium-regulated non-lysosomal thiol-protease. The chain is Calpain-5 (Capn5) from Mus musculus (Mouse).